Reading from the N-terminus, the 175-residue chain is NADH-ubiquinone oxidoreductase chain 6 (175 aa).

Helical transmembrane passes span 1-21, 25-45, 47-67, 88-108, and 149-169; these read MTMY…VGFS, SPIY…GIVL, FGGS…MLVV, TVFG…YYAL, and YGTW…VVIM.

This sequence belongs to the complex I subunit 6 family. Core subunit of respiratory chain NADH dehydrogenase (Complex I) which is composed of 45 different subunits.

It localises to the mitochondrion inner membrane. The catalysed reaction is a ubiquinone + NADH + 5 H(+)(in) = a ubiquinol + NAD(+) + 4 H(+)(out). Its function is as follows. Core subunit of the mitochondrial membrane respiratory chain NADH dehydrogenase (Complex I) which catalyzes electron transfer from NADH through the respiratory chain, using ubiquinone as an electron acceptor. Essential for the catalytic activity and assembly of complex I. The chain is NADH-ubiquinone oxidoreductase chain 6 (MT-ND6) from Sus scrofa (Pig).